The chain runs to 215 residues: Thiamine import ATP-binding protein ThiQ (215 aa).

The 214-residue stretch at Ile2 to Val215 folds into the ABC transporter domain. Gly32 to Ser39 provides a ligand contact to ATP.

Belongs to the ABC transporter superfamily. Thiamine importer (TC 3.A.1.19.1) family. The complex is composed of two ATP-binding proteins (ThiQ), two transmembrane proteins (ThiP) and a solute-binding protein (ThiB).

The protein resides in the cell inner membrane. It carries out the reaction thiamine(out) + ATP + H2O = thiamine(in) + ADP + phosphate + H(+). Its function is as follows. Part of the ABC transporter complex ThiBPQ involved in thiamine import. Responsible for energy coupling to the transport system. In Haemophilus influenzae (strain ATCC 51907 / DSM 11121 / KW20 / Rd), this protein is Thiamine import ATP-binding protein ThiQ.